Here is a 218-residue protein sequence, read N- to C-terminus: Host range factor 1 (218 aa).

Functionally, facilitates AcMNPV replication in two non-permissive cell lines, IPLB-Ld652Y and IPLB-LdFB. This is Host range factor 1 (HRF-1) from Lepidoptera (butterflies and moths).